The following is a 681-amino-acid chain: Fibulin-1 (681 aa).

Residues 1–17 (MDLYMIVLLSLCGLLRA) form the signal peptide. Intrachain disulfides connect C29-C55, C30-C62, C43-C63, C72-C103, C85-C104, C106-C125, C107-C138, C114-C139, C162-C171, C167-C176, C178-C191, C197-C210, C204-C219, C225-C237, C243-C256, C250-C265, C271-C283, C289-C301, C317-C330, C336-C348, C343-C357, C359-C372, C378-C390, C386-C399, C401-C414, C420-C429, C440-C454, C460-C473, C469-C482, C484-C498, C504-C517, C511-C526, and C531-C553. 3 Anaphylatoxin-like domains span residues 29–63 (CCED…EQCC), 68–107 (EDSI…CECC), and 108–139 (LLGS…RSCC). In terms of domain architecture, EGF-like 1 spans 158 to 192 (TEDQCRAAGCAQRCLNGTCSCLDGFKLKTDGKHCE). Residue N173 is glycosylated (N-linked (GlcNAc...) asparagine). The EGF-like 2; calcium-binding domain occupies 193–238 (DINECLLGPHHCVTGERCINTLGSYRCQREISCGTGYELTDNNKCK). Residues 239-284 (DIDECDLGTHNCAAEMECQNTAGSFRCRPRMQCAAGFIQDALGSCI) enclose the EGF-like 3; calcium-binding domain. The EGF-like 4; calcium-binding domain maps to 285–331 (DINECVSVTALSRGQMCFNTVGSFICQRHSVTCGRGYHLNAEGTRCV). The region spanning 332-373 (DIDECAGPDNSCDGHGCINLVGSYRCECRTGFIFNSISRSCE) is the EGF-like 5; calcium-binding domain. An EGF-like 6; calcium-binding domain is found at 374 to 415 (DIDECRNYPGRLCAHKCENILGSYKCSCTAGFKLADDGRNCD). One can recognise an EGF-like 7; calcium-binding domain in the interval 416 to 455 (DVNECESSPCSQGCANVYGSYQSYCRRGYQLSDADGITCE). The region spanning 456–499 (DIDECALPTGGHICSYRCHNTPGSFHCTCPASGYTLAANGRSCQ) is the EGF-like 8; calcium-binding domain. The region spanning 500 to 554 (DIDECLTGTHSCSESESCFNIQGGFRCLSFDCPANYRRSGDTRPRVDRADIIRCV) is the EGF-like 9; calcium-binding domain.

Belongs to the fibulin family. In terms of assembly, homomultimerizes and interacts with various extracellular matrix components such as FN1, LAMA1, NID, AGC1 and CSPG2.

It is found in the secreted. The protein localises to the extracellular space. It localises to the extracellular matrix. In terms of biological role, incorporated into fibronectin-containing matrix fibers. May play a role in cell adhesion and migration along protein fibers within the extracellular matrix (ECM). Could be important for certain developmental processes and contribute to the supramolecular organization of ECM architecture, in particular to those of basement membranes. This Danio rerio (Zebrafish) protein is Fibulin-1 (fbln1).